Reading from the N-terminus, the 530-residue chain is Dual specificity calcium/calmodulin-dependent 3',5'-cyclic nucleotide phosphodiesterase 1A (530 aa).

2 calmodulin-binding regions span residues 24-44 and 114-137; these read TEKM…QLEK and EKPR…MYRK. The PDEase domain maps to 142-508; it reads VGLAYPEAVI…ERWKELAAQG (367 aa). Residue H219 is the Proton donor of the active site. Positions 223, 259, 260, and 366 each coordinate Zn(2+). D260 serves as a coordination point for Mg(2+). Disordered regions lie at residues 450-471 and 502-530; these read TKTP…NDGT and KELA…ETHS. A compositionally biased stretch (polar residues) spans 451–471; the sequence is KTPSYGASRRSNMKGTTNDGT. Basic and acidic residues predominate over residues 510 to 530; the sequence is PDPHKNSDLVNAEEKHAETHS.

This sequence belongs to the cyclic nucleotide phosphodiesterase family. PDE1 subfamily. As to quaternary structure, homodimer. Interacts with YWHAZ. The cofactor is Zn(2+). Mg(2+) is required as a cofactor.

The catalysed reaction is a nucleoside 3',5'-cyclic phosphate + H2O = a nucleoside 5'-phosphate + H(+). It carries out the reaction 3',5'-cyclic GMP + H2O = GMP + H(+). The enzyme catalyses 3',5'-cyclic AMP + H2O = AMP + H(+). Type I PDE are activated by the binding of calmodulin in the presence of Ca(2+). In terms of biological role, calcium/calmodulin-dependent cyclic nucleotide phosphodiesterase with a dual specificity for the second messengers cGMP and cAMP, which are key regulators of many important physiological processes. Has a higher efficiency with cGMP compared to cAMP. The protein is Dual specificity calcium/calmodulin-dependent 3',5'-cyclic nucleotide phosphodiesterase 1A of Bos taurus (Bovine).